The chain runs to 503 residues: 12-dehydrotetracycline 5-monooxygenase/anhydrotetracycline 6-monooxygenase (503 aa).

FAD contacts are provided by residues T13, 32–33 (ER), L44, Q99, V123, T160, D288, and 301–302 (LN).

The protein belongs to the PheA/TfdB FAD monooxygenase family. As to quaternary structure, monomer. Requires FAD as cofactor.

It carries out the reaction 5a,11a-dehydrotetracycline + NADPH + O2 + H(+) = 5a,11a-dehydrooxytetracycline + NADP(+) + H2O. It catalyses the reaction anhydrotetracycline + NADPH + O2 + H(+) = 5a,11a-dehydrotetracycline + NADP(+) + H2O. It participates in antibiotic biosynthesis; oxytetracycline biosynthesis. Involved in the biosynthesis of the antibiotics oxytetracycline and tetracycline. OxyS starts by catalyzing the stereospecific hydroxylation of anhydrotetracycline at C(6) position to yield 5a,11a-dehydrotetracycline (12-dehydrotetracycline). If the released product is captured by OxyR, it is reduced to tetracycline. However, if the released product is recaptured by OxyS, it performs an additional hydroxylation at C(5), producing 5a,11a-dehydrooxytetracycline, which, following the action of OxyR becomes oxytetracycline. The chain is 12-dehydrotetracycline 5-monooxygenase/anhydrotetracycline 6-monooxygenase from Streptomyces rimosus subsp. rimosus (strain ATCC 10970 / DSM 40260 / JCM 4667 / NRRL 2234).